We begin with the raw amino-acid sequence, 315 residues long: ATP synthase gamma chain (315 aa).

Belongs to the ATPase gamma chain family. In terms of assembly, F-type ATPases have 2 components, CF(1) - the catalytic core - and CF(0) - the membrane proton channel. CF(1) has five subunits: alpha(3), beta(3), gamma(1), delta(1), epsilon(1). CF(0) has three main subunits: a, b and c.

It is found in the cellular thylakoid membrane. Its function is as follows. Produces ATP from ADP in the presence of a proton gradient across the membrane. The gamma chain is believed to be important in regulating ATPase activity and the flow of protons through the CF(0) complex. The chain is ATP synthase gamma chain from Trichormus variabilis (strain ATCC 29413 / PCC 7937) (Anabaena variabilis).